A 266-amino-acid polypeptide reads, in one-letter code: Glycine--tRNA ligase beta subunit (266 aa).

Belongs to the class-II aminoacyl-tRNA synthetase family. Tetramer of two alpha and two beta subunits.

It localises to the cytoplasm. The catalysed reaction is tRNA(Gly) + glycine + ATP = glycyl-tRNA(Gly) + AMP + diphosphate. The protein is Glycine--tRNA ligase beta subunit (glyS) of Moraxella catarrhalis (Branhamella catarrhalis).